Here is a 157-residue protein sequence, read N- to C-terminus: Small heat shock protein ibp (157 aa).

The region spanning 35 to 148 (EKPISDTPTY…KPKKISINVP (114 aa)) is the sHSP domain.

Belongs to the small heat shock protein (HSP20) family.

This Buchnera aphidicola subsp. Acyrthosiphon pisum (strain APS) (Acyrthosiphon pisum symbiotic bacterium) protein is Small heat shock protein ibp (ibp).